Reading from the N-terminus, the 383-residue chain is Mannitol-1-phosphate 5-dehydrogenase (383 aa).

NAD(+) is bound at residue 3–14; it reads ALHFGAGNIGRG.

The protein belongs to the mannitol dehydrogenase family.

It catalyses the reaction D-mannitol 1-phosphate + NAD(+) = beta-D-fructose 6-phosphate + NADH + H(+). The sequence is that of Mannitol-1-phosphate 5-dehydrogenase from Serratia proteamaculans (strain 568).